The following is a 201-amino-acid chain: Probable DNA replication complex GINS protein PSF1 (201 aa).

The protein belongs to the GINS1/PSF1 family. In terms of assembly, component of the GINS complex which is a heterotetramer of gins1, gins2, gins3 and gins4.

It localises to the nucleus. The GINS complex plays an essential role in the initiation of DNA replication. In Caenorhabditis briggsae, this protein is Probable DNA replication complex GINS protein PSF1.